A 447-amino-acid chain; its full sequence is Methylenetetrahydrofolate--tRNA-(uracil-5-)-methyltransferase TrmFO (447 aa).

8–13 (GGGLAG) lines the FAD pocket. The segment at 398–421 (NWGLVPAPPKRENGRRLGRQERRR) is disordered. The span at 406–417 (PKRENGRRLGRQ) shows a compositional bias: basic and acidic residues.

Belongs to the MnmG family. TrmFO subfamily. The cofactor is FAD.

It is found in the cytoplasm. The enzyme catalyses uridine(54) in tRNA + (6R)-5,10-methylene-5,6,7,8-tetrahydrofolate + NADH + H(+) = 5-methyluridine(54) in tRNA + (6S)-5,6,7,8-tetrahydrofolate + NAD(+). It catalyses the reaction uridine(54) in tRNA + (6R)-5,10-methylene-5,6,7,8-tetrahydrofolate + NADPH + H(+) = 5-methyluridine(54) in tRNA + (6S)-5,6,7,8-tetrahydrofolate + NADP(+). Functionally, catalyzes the folate-dependent formation of 5-methyl-uridine at position 54 (M-5-U54) in all tRNAs. This is Methylenetetrahydrofolate--tRNA-(uracil-5-)-methyltransferase TrmFO from Rubrobacter xylanophilus (strain DSM 9941 / JCM 11954 / NBRC 16129 / PRD-1).